We begin with the raw amino-acid sequence, 510 residues long: 2,3-bisphosphoglycerate-independent phosphoglycerate mutase (510 aa).

Mn(2+) contacts are provided by Asp13 and Ser63. The active-site Phosphoserine intermediate is the Ser63. Substrate contacts are provided by residues His124, 154 to 155 (RD), Arg186, Arg192, 262 to 265 (RADR), and Lys334. Mn(2+) is bound by residues Asp401, His405, Asp442, His443, and His461.

This sequence belongs to the BPG-independent phosphoglycerate mutase family. Monomer. Requires Mn(2+) as cofactor.

It catalyses the reaction (2R)-2-phosphoglycerate = (2R)-3-phosphoglycerate. The protein operates within carbohydrate degradation; glycolysis; pyruvate from D-glyceraldehyde 3-phosphate: step 3/5. Catalyzes the interconversion of 2-phosphoglycerate and 3-phosphoglycerate. This is 2,3-bisphosphoglycerate-independent phosphoglycerate mutase from Aliivibrio fischeri (strain ATCC 700601 / ES114) (Vibrio fischeri).